Here is a 365-residue protein sequence, read N- to C-terminus: Phospho-N-acetylmuramoyl-pentapeptide-transferase (365 aa).

Helical transmembrane passes span 3-23 (HIIIGGAVSFIIAILFTPILI), 54-74 (GIAIIVAIVGGYFLAHLASVF), 81-101 (PTASGLLVLGLTVGMGFLGFL), 119-139 (GKLLGQAVLAIGFGVLCLLFL), 162-182 (IAIGGGIIGTLIFLLFIYILV), 198-218 (LAAGTTAIVMAAYSIMTFWQF), 239-259 (LSILAACGLGACLGFLWWNAA), 263-283 (IFMGDTGSLALGGLVAGLSVT), 289-309 (LMIVIGALFVAETISVVIQVV), and 342-362 (FWLLTAMFAVAGVSMFYADWL).

It belongs to the glycosyltransferase 4 family. MraY subfamily. Mg(2+) serves as cofactor.

The protein resides in the cell membrane. The enzyme catalyses UDP-N-acetyl-alpha-D-muramoyl-L-alanyl-gamma-D-glutamyl-meso-2,6-diaminopimeloyl-D-alanyl-D-alanine + di-trans,octa-cis-undecaprenyl phosphate = di-trans,octa-cis-undecaprenyl diphospho-N-acetyl-alpha-D-muramoyl-L-alanyl-D-glutamyl-meso-2,6-diaminopimeloyl-D-alanyl-D-alanine + UMP. The protein operates within cell wall biogenesis; peptidoglycan biosynthesis. Functionally, catalyzes the initial step of the lipid cycle reactions in the biosynthesis of the cell wall peptidoglycan: transfers peptidoglycan precursor phospho-MurNAc-pentapeptide from UDP-MurNAc-pentapeptide onto the lipid carrier undecaprenyl phosphate, yielding undecaprenyl-pyrophosphoryl-MurNAc-pentapeptide, known as lipid I. This chain is Phospho-N-acetylmuramoyl-pentapeptide-transferase, found in Corynebacterium kroppenstedtii (strain DSM 44385 / JCM 11950 / CIP 105744 / CCUG 35717).